The following is a 148-amino-acid chain: Large ribosomal subunit protein uL22c (148 aa).

The protein belongs to the universal ribosomal protein uL22 family. In terms of assembly, part of the 50S ribosomal subunit.

Its subcellular location is the plastid. The protein resides in the chloroplast. In terms of biological role, this protein binds specifically to 23S rRNA. Functionally, the globular domain of the protein is located near the polypeptide exit tunnel on the outside of the subunit, while an extended beta-hairpin is found that lines the wall of the exit tunnel in the center of the 70S ribosome. In Triticum aestivum (Wheat), this protein is Large ribosomal subunit protein uL22c (rpl22).